We begin with the raw amino-acid sequence, 369 residues long: Glutamate 5-kinase (369 aa).

Residue K14 coordinates ATP. Substrate is bound by residues S56, D143, and N155. Residues 175 to 176 and 215 to 221 contribute to the ATP site; these read SD and TGGMASK. The PUA domain maps to 277–351; it reads AGKIRLDDGA…GMQTQDLPDG (75 aa).

This sequence belongs to the glutamate 5-kinase family.

It is found in the cytoplasm. It catalyses the reaction L-glutamate + ATP = L-glutamyl 5-phosphate + ADP. It participates in amino-acid biosynthesis; L-proline biosynthesis; L-glutamate 5-semialdehyde from L-glutamate: step 1/2. Catalyzes the transfer of a phosphate group to glutamate to form L-glutamate 5-phosphate. In Corynebacterium glutamicum (strain ATCC 13032 / DSM 20300 / JCM 1318 / BCRC 11384 / CCUG 27702 / LMG 3730 / NBRC 12168 / NCIMB 10025 / NRRL B-2784 / 534), this protein is Glutamate 5-kinase.